The primary structure comprises 42 residues: Photosystem II reaction center protein J (42 aa).

The helical transmembrane segment at Ile10–Phe30 threads the bilayer.

The protein belongs to the PsbJ family. In terms of assembly, PSII is composed of 1 copy each of membrane proteins PsbA, PsbB, PsbC, PsbD, PsbE, PsbF, PsbH, PsbI, PsbJ, PsbK, PsbL, PsbM, PsbT, PsbX, PsbY, PsbZ, Psb30/Ycf12, at least 3 peripheral proteins of the oxygen-evolving complex and a large number of cofactors. It forms dimeric complexes.

It is found in the plastid. Its subcellular location is the chloroplast thylakoid membrane. Its function is as follows. One of the components of the core complex of photosystem II (PSII). PSII is a light-driven water:plastoquinone oxidoreductase that uses light energy to abstract electrons from H(2)O, generating O(2) and a proton gradient subsequently used for ATP formation. It consists of a core antenna complex that captures photons, and an electron transfer chain that converts photonic excitation into a charge separation. The polypeptide is Photosystem II reaction center protein J (Zygnema circumcarinatum (Green alga)).